The sequence spans 93 residues: NADH-ubiquinone oxidoreductase chain 4L (93 aa).

The next 3 membrane-spanning stretches (helical) occupy residues L3–G23, I27–L47, and I55–G75.

This sequence belongs to the complex I subunit 4L family.

The protein resides in the mitochondrion membrane. It carries out the reaction a ubiquinone + NADH + 5 H(+)(in) = a ubiquinol + NAD(+) + 4 H(+)(out). Its function is as follows. Core subunit of the mitochondrial membrane respiratory chain NADH dehydrogenase (Complex I) that is believed to belong to the minimal assembly required for catalysis. Complex I functions in the transfer of electrons from NADH to the respiratory chain. The immediate electron acceptor for the enzyme is believed to be ubiquinone. This Wickerhamomyces canadensis (Yeast) protein is NADH-ubiquinone oxidoreductase chain 4L (ND4L).